The following is a 587-amino-acid chain: MDGESIKPSSQPLIQTGDDEKNQRTITVNPAHMGKAFKVMNELRSKQLLCDVMIVAEDVEIEAHRVVLAACSPYFCAMFTGDMSESKAKKIEIKDVDGQTLSKLIDYIYTAEIEVTEENVQVLLPAASLLQLMDVRQNCCDFLQSQLHPTNCLGIRAFADVHTCTDLLQQANAYAEQHFPEVMLGEEFLSLSLDQVCSLISSDKLTVSSEEKVFEAVISWINYEKETRLEHMAKLMEHVRLPLLPRDYLVQTVEEEALIKNNNTCKDFLIEAMKYHLLPLDQRLLIKNPRTKPRTPVSLPKVMIVVGGQAPKAIRSVECYDFEEDRWDQIAELPSRRCRAGVVFMAGHVYAVGGFNGSLRVRTVDVYDGVKDQWTSIASMQERRSTLGAAVLNDLLYAVGGFDGSTGLASVEAYSYKTNEWFFVAPMNTRRSSVGVGVVEGKLYAVGGYDGASRQCLSTVEQYNPATNEWTYVADMSTRRSGAGVGVLSGQLYATGGHDGPLVRKSVEVYDPGTNTWKQVADMNMCRRNAGVCAVNGLLYVVGGDDGSCNLASVEYYNPVTDKWTLLPTNMSTGRSYAGVAVIHKPL.

The disordered stretch occupies residues 1-22 (MDGESIKPSSQPLIQTGDDEKN). The residue at position 10 (serine 10) is a Phosphoserine. One can recognise a BTB domain in the interval 50–117 (CDVMIVAEDV…IYTAEIEVTE (68 aa)). The 103-residue stretch at 152–254 (CLGIRAFADV…PRDYLVQTVE (103 aa)) folds into the BACK domain. Phosphothreonine is present on threonine 295. Kelch repeat units lie at residues 302-347 (VMIV…FMAG), 348-394 (HVYA…VLND), 396-441 (LYAV…VVEG), 442-490 (KLYA…VLSG), 491-537 (QLYA…AVNG), and 539-585 (LYVV…VIHK). At threonine 375 the chain carries Phosphothreonine. Phosphoserine is present on residues serine 376 and serine 433.

Belongs to the KLHL3 family. In terms of assembly, homodimer. Component of the BCR(KLHL3) E3 ubiquitin ligase complex, at least composed of CUL3 and KLHL3 and RBX1. Interacts with CLDN8. Phosphorylation at Ser-433 by PKA or PKC decreases the interaction with WNK1 and WNK4, leading to inhibit their degradation by the BCR(KLHL3) complex. Phosphorylated at Ser-433 by PKC in response to angiotensin II signaling, decreasing ability to promote degradation of WNK1 and WNK4, leading to activation of Na-Cl cotransporter SLC12A3/NCC. Phosphorylation at Ser-433 is increased by insulin. Dephosphorylated at Ser-433 by calcineurin PPP3CA, promoting degradation of WNK1 and WNK4.

The protein resides in the cytoplasm. It localises to the cytoskeleton. It is found in the cytosol. It functions in the pathway protein modification; protein ubiquitination. Functionally, substrate-specific adapter of a BCR (BTB-CUL3-RBX1) E3 ubiquitin ligase complex that acts as a regulator of ion transport in the distal nephron. The BCR(KLHL3) complex acts by mediating ubiquitination and degradation of WNK1 and WNK4, two activators of Na-Cl cotransporter SLC12A3/NCC in distal convoluted tubule cells of kidney, thereby regulating NaCl reabsorption. The BCR(KLHL3) complex also mediates ubiquitination and degradation of WNK3. The BCR(KLHL3) complex also mediates ubiquitination of CLDN8, a tight-junction protein required for paracellular chloride transport in the kidney, leading to its degradation. The protein is Kelch-like protein 3 (KLHL3) of Bos taurus (Bovine).